Reading from the N-terminus, the 1177-residue chain is Dynein axonemal assembly factor 9 (1177 aa).

Positions 1-27 are disordered; sequence MDVYPPRRQGLPRARSPGGSSRGSPSV. A compositionally biased stretch (low complexity) spans 11-27; sequence LPRARSPGGSSRGSPSV.

Interacts with ARL3.

In terms of biological role, may act as an effector for ARL3. This is Dynein axonemal assembly factor 9 from Homo sapiens (Human).